The sequence spans 739 residues: UPF0313 protein YgiQ (739 aa).

The region spanning 372–650 is the Radical SAM core domain; the sequence is AYEMIRFSVN…KALLRYHDPA (279 aa). Residues Cys-386, Cys-390, and Cys-393 each coordinate [4Fe-4S] cluster. The tract at residues 686–739 is disordered; the sequence is EARRQNRNTRPALTKHTPMATQCQTPATAKKASSTQSRPVNAGAKKRPKAAVGR. Residues 704–724 are compositionally biased toward polar residues; the sequence is MATQCQTPATAKKASSTQSRP. Residues 729–739 show a composition bias toward basic residues; that stretch reads AKKRPKAAVGR.

This sequence belongs to the UPF0313 family. [4Fe-4S] cluster is required as a cofactor.

This chain is UPF0313 protein YgiQ, found in Escherichia coli O157:H7.